The sequence spans 181 residues: Ribosome-recycling factor (181 aa).

Residues 135–160 form a disordered region; sequence MDDIKKDKDMPEDDARKAEDQTQKLT.

Belongs to the RRF family.

It localises to the cytoplasm. Functionally, responsible for the release of ribosomes from messenger RNA at the termination of protein biosynthesis. May increase the efficiency of translation by recycling ribosomes from one round of translation to another. This Leuconostoc mesenteroides subsp. mesenteroides (strain ATCC 8293 / DSM 20343 / BCRC 11652 / CCM 1803 / JCM 6124 / NCDO 523 / NBRC 100496 / NCIMB 8023 / NCTC 12954 / NRRL B-1118 / 37Y) protein is Ribosome-recycling factor.